The following is a 554-amino-acid chain: Developmental and secondary metabolism regulator ve-1 (554 aa).

The 200-residue stretch at 31–230 folds into the Velvet domain; that stretch reads GRKLWYSLRV…AEQGCRVRIR (200 aa). The Nuclear localization signal signature appears at 45–50; it reads LRARAC. Positions 166–175 are enriched in basic and acidic residues; that stretch reads TKEDKDKDPE. Disordered regions lie at residues 166–190, 232–430, and 465–528; these read TKED…SFDF, DVRM…PHRL, and PRAY…VDDK. The segment covering 276-292 has biased composition (polar residues); that stretch reads RSMSGSTERTPYSSISD. 2 stretches are compositionally biased toward pro residues: residues 363-372 and 485-494; these read SYPPPPPPHQ and LPPPPPPPPQ. Positions 455–487 are PEST; the sequence is SPSNMAAPPYPRAYSVSNSGGLTSAGGYNQLPP. The segment covering 500–528 has biased composition (basic and acidic residues); the sequence is RAHDQTFRADPEMRRYQDGARERESVDDK.

Belongs to the velvet family. VeA subfamily. In terms of assembly, component of the heterotrimeric velvet complex composed of lae-1, ve-1 and vel-2; Ve-1 acting as a bridging protein between lae-1 and vel-2.

It localises to the nucleus. It is found in the cytoplasm. Its function is as follows. Component of the velvet transcription factor complex that controls sexual/asexual developmental ratio in response to light, promoting sexual development in the darkness while stimulating asexual sporulation under illumination. The velvet complex hat acts as a global regulator for secondary metabolite gene expression. This chain is Developmental and secondary metabolism regulator ve-1, found in Neurospora crassa (strain ATCC 24698 / 74-OR23-1A / CBS 708.71 / DSM 1257 / FGSC 987).